The primary structure comprises 875 residues: Serrate RNA effector molecule homolog (875 aa).

Residues 1–90 (MGDSDDEYDR…RRDWDEHSSD (90 aa)) form a disordered region. N-acetylglycine is present on Gly-2. Ser-4 carries the phosphoserine modification. Tyr-8 bears the Phosphotyrosine mark. The segment covering 8 to 73 (YDRRRRDKFR…ERFSPPRHEL (66 aa)) has biased composition (basic and acidic residues). Phosphoserine is present on residues Ser-67, Ser-74, and Ser-136. Residue Lys-150 forms a Glycyl lysine isopeptide (Lys-Gly) (interchain with G-Cter in SUMO2) linkage. Residues 272 to 411 (EEEEQAGKTG…KPKDAAGLEC (140 aa)) form a disordered region. The segment covering 297-345 (EGERKANDKDEKKEDGKQAENDSSNDDKTKKSEGDGDKEEKKEEAEKEA) has biased composition (basic and acidic residues). The span at 369–386 (SESESEGGQAEEEKEEAE) shows a compositional bias: acidic residues. Residues 387 to 411 (EALKEKEKPKEEEKEKPKDAAGLEC) show a composition bias toward basic and acidic residues. Phosphoserine occurs at positions 492 and 539. Thr-543 carries the phosphothreonine modification. At Ser-569 the chain carries Phosphoserine. The segment at 571–597 (EEEELLGSSGGPPPEEPPKEGNPAEIN) is disordered. At Thr-670 the chain carries Phosphothreonine. A Phosphoserine modification is found at Ser-678. Arg-832, Arg-839, and Arg-849 each carry omega-N-methylarginine. The interval 834–853 (NYDAFRGQGGYPGKPRNRMV) is disordered.

It belongs to the ARS2 family. Interacts with CASP8AP2 and ERBB4. Interacts with NCBP1/CBP80 and DROSHA. Interacts with LUZP4. Interacts with NCBP2/CBP20 and NCBP3. Interacts with MTREX. In terms of tissue distribution, widely expressed, with a preference for proliferating cells. Highly expressed in hematopoietic tissues and reduced or absent expression in parenchymal organs like liver and kidney. In the brain, expressed in the subventricular zone by niche astrocytes, ependymal cells and neural stem cells. In this cerebral context, expressed in slowly dividing cells.

It localises to the nucleus. The protein localises to the nucleoplasm. Its subcellular location is the cytoplasm. Acts as a mediator between the cap-binding complex (CBC) and the primary microRNAs (miRNAs) processing machinery during cell proliferation. Contributes to the stability and delivery of capped primary miRNA transcripts to the primary miRNA processing complex containing DGCR8 and DROSHA, thereby playing a role in RNA-mediated gene silencing (RNAi) by miRNAs. Binds capped RNAs (m7GpppG-capped RNA); however interaction is probably mediated via its interaction with NCBP1/CBP80 component of the CBC complex. Involved in cell cycle progression at S phase. Does not directly confer arsenite resistance but rather modulates arsenic sensitivity. Independently of its activity on miRNAs, necessary and sufficient to promote neural stem cell self-renewal. Does so by directly binding SOX2 promoter and positively regulating its transcription. This Mus musculus (Mouse) protein is Serrate RNA effector molecule homolog (Srrt).